The following is a 139-amino-acid chain: D-ribose pyranase (139 aa).

Residue His-20 is the Proton donor of the active site. Residues Asp-28, His-106, and Tyr-128–Asn-130 each bind substrate.

Belongs to the RbsD / FucU family. RbsD subfamily. In terms of assembly, homodecamer.

The protein resides in the cytoplasm. The enzyme catalyses beta-D-ribopyranose = beta-D-ribofuranose. Its pathway is carbohydrate metabolism; D-ribose degradation; D-ribose 5-phosphate from beta-D-ribopyranose: step 1/2. In terms of biological role, catalyzes the interconversion of beta-pyran and beta-furan forms of D-ribose. This Vibrio vulnificus (strain CMCP6) protein is D-ribose pyranase.